The sequence spans 534 residues: Beta-glucosidase 32 (534 aa).

A signal peptide spans 1-22 (MAIKLIALVITICVASWDSAQG). Position 51 (glutamine 51) interacts with a beta-D-glucoside. N-linked (GlcNAc...) asparagine glycosylation occurs at asparagine 68. A beta-D-glucoside is bound by residues histidine 154 and 199–200 (NE). Glutamate 200 (proton donor) is an active-site residue. Residues cysteine 219 and cysteine 227 are joined by a disulfide bond. Tyrosine 344 lines the a beta-D-glucoside pocket. Asparagine 374 carries N-linked (GlcNAc...) asparagine glycosylation. Glutamate 417 lines the a beta-D-glucoside pocket. The active-site Nucleophile is the glutamate 417. Asparagine 425 carries N-linked (GlcNAc...) asparagine glycosylation. A beta-D-glucoside is bound by residues tryptophan 467, 474 to 475 (EW), and phenylalanine 483.

The protein belongs to the glycosyl hydrolase 1 family.

It catalyses the reaction Hydrolysis of terminal, non-reducing beta-D-glucosyl residues with release of beta-D-glucose.. This Arabidopsis thaliana (Mouse-ear cress) protein is Beta-glucosidase 32.